The chain runs to 336 residues: Atypical chemokine receptor 1 (336 aa).

The tract at residues 1–30 is mediates Plasmodium vivax Duffy receptor (PVDR) binding; that stretch reads MGNCLHRAELSPSTENSSQLDFEDVWNSSY. The Extracellular portion of the chain corresponds to 1–63; that stretch reads MGNCLHRAEL…CNLLDDSALP (63 aa). An N-linked (GlcNAc...) asparagine glycan is attached at asparagine 16. Residue tyrosine 30 is modified to Sulfotyrosine. Residue asparagine 33 is glycosylated (N-linked (GlcNAc...) asparagine). Tyrosine 41 carries the post-translational modification Sulfotyrosine. Cystine bridges form between cysteine 51-cysteine 276 and cysteine 129-cysteine 195. The helical transmembrane segment at 64–84 threads the bilayer; the sequence is FFILTSVLGILASSTVLFMLF. The Cytoplasmic portion of the chain corresponds to 85–95; the sequence is RPLFRWQLCPG. The helical transmembrane segment at 96 to 116 threads the bilayer; it reads WPVLAQLAVGSALFSIVVPVL. Residues 117 to 129 are Extracellular-facing; the sequence is APGLGSTRSSALC. A helical membrane pass occupies residues 130 to 153; it reads SLGYCVWYGSAFAQALLLGCHASL. Topologically, residues 154–166 are cytoplasmic; sequence GHRLGAGQVPGLT. The helical transmembrane segment at 167-187 threads the bilayer; that stretch reads LGLTVGIWGVAALLTLPVTLA. The Extracellular segment spans residues 188–207; it reads SGASGGLCTLIYSTELKALQ. Residues 208 to 228 traverse the membrane as a helical segment; the sequence is ATHTVACLAIFVLLPLGLFGA. Residues 229–244 lie on the Cytoplasmic side of the membrane; that stretch reads KGLKKALGMGPGPWMN. Residues 245-265 form a helical membrane-spanning segment; sequence ILWAWFIFWWPHGVVLGLDFL. At 266-287 the chain is on the extracellular side; that stretch reads VRSKLLLLSTCLAQQALDLLLN. Residues 288 to 308 traverse the membrane as a helical segment; the sequence is LAEALAILHCVATPLLLALFC. Residues 309–336 are Cytoplasmic-facing; that stretch reads HQATRTLLPSLPLPEGWSSHLDTLGSKS.

The protein belongs to the G-protein coupled receptor 1 family. Atypical chemokine receptor subfamily. (Microbial infection) Interacts (via N-terminal extracellular domain) with Plasmodium vivax Duffy receptor (PVDR) (via PvRII region). In terms of assembly, (Microbial infection) Interacts (via N-terminal extracellular domain) with Plasmodium knowlesi Duffy receptor alpha form (DBPalpha) (via region II). In terms of processing, sulfation at Tyr-41 facilitates interaction with MGSA/CXCL1, RANTES/CCL5 and MCP-1/CCL2 but not IL8/CXCL8. Sulfation at Tyr-30 facilitates interaction with IL8/CXCL8. (Microbial infection) Sulfation at Tyr-41 facilitates interaction with Plasmodium vivax Duffy receptor (PVDR). Sulfation at Tyr-30/Tyr-41 and Tyr-41 alone increases binding affinity of Plasmodium vivax parasites and likely promotes invasion of red blood cells. Post-translationally, (Microbial infection) Sulfation at Tyr-41 facilitates interaction with Plasmodium knowlesi Duffy receptor alpha form (DBPalpha). Sulfation at Tyr-30/Tyr-41 and Tyr-41 alone increases binding affinity of Plasmodium knowlesi parasites and likely promotes invasion of red blood cells. As to expression, found in adult kidney, adult spleen, bone marrow and fetal liver. In particular, it is expressed along postcapillary venules throughout the body, except in the adult liver. Erythroid cells and postcapillary venule endothelium are the principle tissues expressing duffy. Fy(-A-B) individuals do not express duffy in the bone marrow, however they do, in postcapillary venule endothelium.

The protein resides in the early endosome. It localises to the recycling endosome. It is found in the membrane. Functionally, atypical chemokine receptor that controls chemokine levels and localization via high-affinity chemokine binding that is uncoupled from classic ligand-driven signal transduction cascades, resulting instead in chemokine sequestration, degradation, or transcytosis. Also known as interceptor (internalizing receptor) or chemokine-scavenging receptor or chemokine decoy receptor. Has a promiscuous chemokine-binding profile, interacting with inflammatory chemokines of both the CXC and the CC subfamilies but not with homeostatic chemokines. Acts as a receptor for chemokines including CCL2, CCL5, CCL7, CCL11, CCL13, CCL14, CCL17, CXCL5, CXCL6, IL8/CXCL8, CXCL11, GRO, RANTES, MCP-1 and TARC. May regulate chemokine bioavailability and, consequently, leukocyte recruitment through two distinct mechanisms: when expressed in endothelial cells, it sustains the abluminal to luminal transcytosis of tissue-derived chemokines and their subsequent presentation to circulating leukocytes; when expressed in erythrocytes, serves as blood reservoir of cognate chemokines but also as a chemokine sink, buffering potential surges in plasma chemokine levels. Its function is as follows. (Microbial infection) Acts as a receptor for the malaria parasite Plasmodium vivax. (Microbial infection) Acts as a receptor for the malaria parasite Plasmodium knowlesi. The polypeptide is Atypical chemokine receptor 1 (ACKR1) (Homo sapiens (Human)).